We begin with the raw amino-acid sequence, 409 residues long: Lissencephaly-1 homolog (409 aa).

The LisH domain occupies 7–39; that stretch reads QEEELRFAVADYLQSCGYTNALEAFKKDASIPK. The stretch at 56-81 forms a coiled coil; sequence SVVRLQKKVMDLELRLNNTTREMNSG. Positions 75–92 are enriched in polar residues; the sequence is TREMNSGVPTRNSRSSND. The segment at 75-105 is disordered; it reads TREMNSGVPTRNSRSSNDWIPRPPEKHSLSG. 7 WD repeats span residues 105-146, 147-186, 189-228, 231-270, 273-332, 335-374, and 377-409; these read GHRS…RTLR, GHTD…CRMT, GHDH…CVYN, GHRE…CKEE, GHEH…CLFS, GHDN…CSKS, and AHNH…WECR.

Belongs to the WD repeat LIS1/nudF family.

The protein resides in the cytoplasm. Its subcellular location is the cytoskeleton. It localises to the microtubule organizing center. The protein localises to the centrosome. Its function is as follows. Positively regulates the activity of the minus-end directed microtubule motor protein dynein. May enhance dynein-mediated microtubule sliding by targeting dynein to the microtubule plus end. Required for several dynein- and microtubule-dependent processes. This Trichoplax adhaerens (Trichoplax reptans) protein is Lissencephaly-1 homolog.